The primary structure comprises 75 residues: Sec-independent protein translocase protein TatA (75 aa).

A helical transmembrane segment spans residues methionine 1–glycine 21. The disordered stretch occupies residues lysine 40–arginine 75.

It belongs to the TatA/E family. In terms of assembly, the Tat system comprises two distinct complexes: a TatABC complex, containing multiple copies of TatA, TatB and TatC subunits, and a separate TatA complex, containing only TatA subunits. Substrates initially bind to the TatABC complex, which probably triggers association of the separate TatA complex to form the active translocon.

It localises to the cell inner membrane. Its function is as follows. Part of the twin-arginine translocation (Tat) system that transports large folded proteins containing a characteristic twin-arginine motif in their signal peptide across membranes. TatA could form the protein-conducting channel of the Tat system. The sequence is that of Sec-independent protein translocase protein TatA from Stenotrophomonas maltophilia (strain R551-3).